We begin with the raw amino-acid sequence, 676 residues long: Pescadillo homolog (676 aa).

A disordered region spans residues 277-296 (TIEGSNKQSNNSSNQEVSRD). Low complexity predominate over residues 281-291 (SNKQSNNSSNQ). A BRCT domain is found at 351 to 467 (EAGALFAPFT…KLLRPDLYAP (117 aa)). The disordered stretch occupies residues 471 to 676 (LPPHLSPWVK…RRKLEKTGEK (206 aa)). A compositionally biased stretch (acidic residues) spans 494 to 519 (EQEEEGEAEMAGEEEEEESDEEMEEA). Basic and acidic residues predominate over residues 520–531 (PETKKADAKADE). 2 stretches are compositionally biased toward acidic residues: residues 532-541 (SESEDEDESV) and 548-581 (ADSD…DEEE). Residues 571 to 676 (EAASESEDEE…RRKLEKTGEK (106 aa)) are a coiled coil. A compositionally biased stretch (basic and acidic residues) spans 582–592 (AARTQHQKELE). Residues 611–624 (KKKSSQAKKIAAKK) are compositionally biased toward basic residues. The segment covering 625 to 635 (RKEEEELERQK) has biased composition (basic and acidic residues).

It belongs to the pescadillo family. In terms of assembly, component of the NOP7 complex, composed of erb1, nop7 and ytm1. The complex is held together by erb1, which interacts with nop7 via its N-terminal domain and with ytm1 via a high-affinity interaction between the seven-bladed beta-propeller domains of the 2 proteins. The NOP7 complex associates with the 66S pre-ribosome.

Its subcellular location is the nucleus. It is found in the nucleolus. It localises to the nucleoplasm. Component of the NOP7 complex, which is required for maturation of the 25S and 5.8S ribosomal RNAs and formation of the 60S ribosome. In Aspergillus terreus (strain NIH 2624 / FGSC A1156), this protein is Pescadillo homolog (nop7).